The primary structure comprises 342 residues: Methylthioribose-1-phosphate isomerase (342 aa).

Residues 49–51 (RGA), Arg86, and Gln187 contribute to the substrate site. Asp228 serves as the catalytic Proton donor. 238-239 (NK) is a substrate binding site.

The protein belongs to the eIF-2B alpha/beta/delta subunits family. MtnA subfamily.

It catalyses the reaction 5-(methylsulfanyl)-alpha-D-ribose 1-phosphate = 5-(methylsulfanyl)-D-ribulose 1-phosphate. It functions in the pathway amino-acid biosynthesis; L-methionine biosynthesis via salvage pathway; L-methionine from S-methyl-5-thio-alpha-D-ribose 1-phosphate: step 1/6. Catalyzes the interconversion of methylthioribose-1-phosphate (MTR-1-P) into methylthioribulose-1-phosphate (MTRu-1-P). In Klebsiella pneumoniae (strain 342), this protein is Methylthioribose-1-phosphate isomerase.